Reading from the N-terminus, the 124-residue chain is Sporulation initiation phosphotransferase F (124 aa).

Residues 5 to 119 (KILIVDDQYG…EIRDAVKKYL (115 aa)) enclose the Response regulatory domain. 4 residues coordinate Mg(2+): D10, D11, D54, and K56. At D54 the chain carries 4-aspartylphosphate.

Requires Mg(2+) as cofactor. Post-translationally, phosphorylated by KinA and KinB. Dephosphorylated by RapA and RapB.

The protein resides in the cytoplasm. Its function is as follows. Key element in the phosphorelay regulating sporulation initiation. Phosphorylation of spo0B during sporulation initiation. The polypeptide is Sporulation initiation phosphotransferase F (spo0F) (Bacillus subtilis (strain 168)).